We begin with the raw amino-acid sequence, 395 residues long: Forkhead box protein I3 (395 aa).

The fork-head DNA-binding region spans 131–225 (RPPYSYSALI…DNGNFRRKRK (95 aa)). Disordered stretches follow at residues 216 to 288 (DNGN…GIIS) and 322 to 370 (RNFS…SSGS). The Nuclear localization signal signature appears at 221 to 227 (RRKRKRR). Over residues 234 to 245 (ATTAAASSLGGL) the composition is skewed to low complexity. Over residues 325 to 335 (SAGQLSGGTFT) the composition is skewed to polar residues. Residues 336–349 (PSSSSSQEVPSPEQ) show a composition bias toward low complexity.

In terms of tissue distribution, initially expressed in the pre-placodal ectoderm surrounding the neural plate, which will give rise to all craniofacial sensory organs. Expression then becomes restricted to a region immediately anterior to the first pair of somites that will give rise to the otic and epibranchial placodes, before becoming down-regulated from this region and restricted to the ectoderm and endoderm of the pharyngeal arches.

It is found in the nucleus. In terms of biological role, transcription factor required for pharyngeal arch development, which is involved in otic placode development. In Gallus gallus (Chicken), this protein is Forkhead box protein I3.